A 60-amino-acid polypeptide reads, in one-letter code: Large ribosomal subunit protein uL30 (60 aa).

It belongs to the universal ribosomal protein uL30 family. As to quaternary structure, part of the 50S ribosomal subunit.

This chain is Large ribosomal subunit protein uL30, found in Leifsonia xyli subsp. xyli (strain CTCB07).